A 96-amino-acid polypeptide reads, in one-letter code: Large ribosomal subunit protein eL14 (96 aa).

Belongs to the eukaryotic ribosomal protein eL14 family.

The sequence is that of Large ribosomal subunit protein eL14 from Sulfurisphaera tokodaii (strain DSM 16993 / JCM 10545 / NBRC 100140 / 7) (Sulfolobus tokodaii).